The primary structure comprises 313 residues: Aspartate carbamoyltransferase catalytic subunit (313 aa).

Residues arginine 51 and threonine 52 each contribute to the carbamoyl phosphate site. Lysine 80 contributes to the L-aspartate binding site. Residues arginine 101, histidine 129, and glutamine 132 each contribute to the carbamoyl phosphate site. Positions 162 and 224 each coordinate L-aspartate. The carbamoyl phosphate site is built by leucine 263 and proline 264.

It belongs to the aspartate/ornithine carbamoyltransferase superfamily. ATCase family. As to quaternary structure, heterododecamer (2C3:3R2) of six catalytic PyrB chains organized as two trimers (C3), and six regulatory PyrI chains organized as three dimers (R2).

It carries out the reaction carbamoyl phosphate + L-aspartate = N-carbamoyl-L-aspartate + phosphate + H(+). Its pathway is pyrimidine metabolism; UMP biosynthesis via de novo pathway; (S)-dihydroorotate from bicarbonate: step 2/3. Functionally, catalyzes the condensation of carbamoyl phosphate and aspartate to form carbamoyl aspartate and inorganic phosphate, the committed step in the de novo pyrimidine nucleotide biosynthesis pathway. This chain is Aspartate carbamoyltransferase catalytic subunit, found in Phocaeicola vulgatus (strain ATCC 8482 / DSM 1447 / JCM 5826 / CCUG 4940 / NBRC 14291 / NCTC 11154) (Bacteroides vulgatus).